The sequence spans 161 residues: E3 ubiquitin ligase complex SCF subunit sconC (161 aa).

Positions 102-161 (ILAANYLDIKPLLDIGCKTVANMIKGKSPEEIRKTFNIQNDFTPEEEDQIRRENEWAEDR) are interaction with the F-box domain of F-box proteins.

The protein belongs to the SKP1 family. In terms of assembly, component of the SCF (SKP1-CUL1-F-box protein) E3 ubiquitin ligase complexes.

Its pathway is protein modification; protein ubiquitination. Essential component of the SCF (SKP1-CUL1-F-box protein) E3 ubiquitin ligase complexes, which mediate the ubiquitination and subsequent proteasomal degradation of target proteins. Controls sulfur metabolite repression, probably by mediating the inactivation or degradation of the metR transcription factor. The sequence is that of E3 ubiquitin ligase complex SCF subunit sconC (sconC) from Emericella nidulans (strain FGSC A4 / ATCC 38163 / CBS 112.46 / NRRL 194 / M139) (Aspergillus nidulans).